The primary structure comprises 412 residues: Putative disintegrin and metalloproteinase domain-containing protein 5 (412 aa).

A Disintegrin domain is found at 111–199 (EKYADTNILL…YCLPDTYVRD (89 aa)). The 35-residue stretch at 351 to 385 (NLKLCDASNHCDRHGVCNNFNHCHCEKGYNPPYCQ) folds into the EGF-like domain.

In terms of assembly, interacts with TEX101. Highly expressed in testis.

This is a non catalytic metalloprotease-like protein. The protein is Putative disintegrin and metalloproteinase domain-containing protein 5 (ADAM5) of Homo sapiens (Human).